Consider the following 72-residue polypeptide: SRY-related protein MG44 (72 aa).

The HMG box DNA-binding region spans 1–69 (VKRPMNAFMV…KHMADYPNYK (69 aa)).

The protein localises to the nucleus. In Tarentola mauritanica (Common wall gecko), this protein is SRY-related protein MG44.